The chain runs to 900 residues: Phosphoenolpyruvate carboxylase (900 aa).

Catalysis depends on residues His-140 and Lys-568.

This sequence belongs to the PEPCase type 1 family. Mg(2+) serves as cofactor.

The enzyme catalyses oxaloacetate + phosphate = phosphoenolpyruvate + hydrogencarbonate. Functionally, forms oxaloacetate, a four-carbon dicarboxylic acid source for the tricarboxylic acid cycle. The chain is Phosphoenolpyruvate carboxylase from Neisseria meningitidis serogroup A / serotype 4A (strain DSM 15465 / Z2491).